Consider the following 269-residue polypeptide: 5'-nucleotidase SurE (269 aa).

A divalent metal cation-binding residues include Asp11, Asp12, Ser43, and Asn101.

It belongs to the SurE nucleotidase family. It depends on a divalent metal cation as a cofactor.

The protein localises to the cytoplasm. It carries out the reaction a ribonucleoside 5'-phosphate + H2O = a ribonucleoside + phosphate. Nucleotidase that shows phosphatase activity on nucleoside 5'-monophosphates. This is 5'-nucleotidase SurE from Prochlorococcus marinus (strain AS9601).